The chain runs to 218 residues: Histone H1.1 (218 aa).

The disordered stretch occupies residues 1-42; that stretch reads MSEVALPAPAASTSPEKPSAGKKAKKPAKAAAAAKKKPAGPS. Position 2 is an N-acetylserine (serine 2). 2 positions are modified to phosphoserine: serine 2 and serine 12. Residue lysine 17 is modified to N6-acetyllysine. Residues 20–38 are compositionally biased toward basic residues; it reads AGKKAKKPAKAAAAAKKKP. Residue lysine 37 is modified to N6-(beta-hydroxybutyryl)lysine. The region spanning 39–112 is the H15 domain; it reads AGPSVSELIV…GASGSFKLNK (74 aa). A Phosphoserine modification is found at serine 44. Lysine 55 carries the post-translational modification N6-(beta-hydroxybutyryl)lysine. Citrulline is present on arginine 57. Lysine 67 bears the N6-(beta-hydroxybutyryl)lysine mark. Lysine 78 bears the N6-acetyllysine mark. An N6-(beta-hydroxybutyryl)lysine modification is found at lysine 88. Lysine 93 carries the post-translational modification N6-(beta-hydroxybutyryl)lysine; alternate. Lysine 93 carries the N6-acetyllysine; alternate modification. Serine 107 carries the phosphoserine; by PKC modification. Lysine 109 bears the N6-(beta-hydroxybutyryl)lysine mark. The disordered stretch occupies residues 116–218; sequence SVDAKPTATK…KPKKAAPKKK (103 aa). Residues 119-149 are compositionally biased toward low complexity; sequence AKPTATKVATKTKVTSASKKPKKASGAAAAK. Position 125 is an N6-acetyllysine (lysine 125). Basic residues-rich tracts occupy residues 150–183 and 190–218; these read KSVK…KKVA and KAVK…PKKK. Threonine 206 is modified (phosphothreonine).

Belongs to the histone H1/H5 family. As to quaternary structure, interacts with DFFB. Post-translationally, H1 histones are progressively phosphorylated during the cell cycle, becoming maximally phosphorylated during late G2 phase and M phase, and being dephosphorylated sharply thereafter. In terms of processing, citrullination at Arg-57 (H1R54ci) by PADI4 takes place within the DNA-binding site of H1 and results in its displacement from chromatin and global chromatin decondensation, thereby promoting pluripotency and stem cell maintenance.

The protein localises to the nucleus. Its subcellular location is the chromosome. Its function is as follows. H1 histones bind to linker DNA between nucleosomes forming the macromolecular structure known as the chromatin fiber. H1 histones are necessary for the condensation of nucleosome chains into higher-order structured fibers. Also acts as a regulator of individual gene transcription through chromatin remodeling. The polypeptide is Histone H1.1 (Bos taurus (Bovine)).